We begin with the raw amino-acid sequence, 169 residues long: Interleukin-2 (169 aa).

The N-terminal stretch at 1 to 20 (MYSMQLASCVTLTLVLLVNS) is a signal peptide. Thr-23 carries O-linked (GalNAc...) threonine glycosylation. The cysteines at positions 92 and 140 are disulfide-linked.

It belongs to the IL-2 family. In terms of tissue distribution, produced by immune cells including dendritic cells. In contrast, macrophages do not produce IL2 upon bacterial stimulation.

It localises to the secreted. Its function is as follows. Cytokine produced by activated CD4-positive helper T-cells and to a lesser extend activated CD8-positive T-cells and natural killer (NK) cells that plays pivotal roles in the immune response and tolerance. Binds to a receptor complex composed of either the high-affinity trimeric IL-2R (IL2RA/CD25, IL2RB/CD122 and IL2RG/CD132) or the low-affinity dimeric IL-2R (IL2RB and IL2RG). Interaction with the receptor leads to oligomerization and conformation changes in the IL-2R subunits resulting in downstream signaling starting with phosphorylation of JAK1 and JAK3. In turn, JAK1 and JAK3 phosphorylate the receptor to form a docking site leading to the phosphorylation of several substrates including STAT5. This process leads to activation of several pathways including STAT, phosphoinositide-3-kinase/PI3K and mitogen-activated protein kinase/MAPK pathways. Functions as a T-cell growth factor and can increase NK-cell cytolytic activity as well. Promotes strong proliferation of activated B-cells and subsequently immunoglobulin production. Plays a pivotal role in regulating the adaptive immune system by controlling the survival and proliferation of regulatory T-cells, which are required for the maintenance of immune tolerance. Moreover, participates in the differentiation and homeostasis of effector T-cell subsets, including Th1, Th2, Th17 as well as memory CD8-positive T-cells. The sequence is that of Interleukin-2 (Il2) from Mus musculus (Mouse).